A 298-amino-acid chain; its full sequence is Tryptophan 2,3-dioxygenase (298 aa).

Substrate is bound by residues 51–55 (FIIQH), Tyr113, and Arg117. His240 provides a ligand contact to heme. Thr254 lines the substrate pocket.

It belongs to the tryptophan 2,3-dioxygenase family. As to quaternary structure, homotetramer. Heme is required as a cofactor.

The enzyme catalyses L-tryptophan + O2 = N-formyl-L-kynurenine. Its pathway is amino-acid degradation; L-tryptophan degradation via kynurenine pathway; L-kynurenine from L-tryptophan: step 1/2. In terms of biological role, heme-dependent dioxygenase that catalyzes the oxidative cleavage of the L-tryptophan (L-Trp) pyrrole ring and converts L-tryptophan to N-formyl-L-kynurenine. Catalyzes the oxidative cleavage of the indole moiety. This is Tryptophan 2,3-dioxygenase from Xanthomonas campestris pv. campestris (strain 8004).